The sequence spans 355 residues: DNA-directed RNA polymerase subunit alpha (355 aa).

The segment at 1–233 (MVREKVRVST…DLFIPFLHKE (233 aa)) is alpha N-terminal domain (alpha-NTD). The interval 268 to 355 (KKKIALKSIF…EIYCYSIFFH (88 aa)) is alpha C-terminal domain (alpha-CTD).

This sequence belongs to the RNA polymerase alpha chain family. In plastids the minimal PEP RNA polymerase catalytic core is composed of four subunits: alpha, beta, beta', and beta''. When a (nuclear-encoded) sigma factor is associated with the core the holoenzyme is formed, which can initiate transcription.

It localises to the plastid. The protein localises to the chloroplast. It catalyses the reaction RNA(n) + a ribonucleoside 5'-triphosphate = RNA(n+1) + diphosphate. In terms of biological role, DNA-dependent RNA polymerase catalyzes the transcription of DNA into RNA using the four ribonucleoside triphosphates as substrates. This chain is DNA-directed RNA polymerase subunit alpha, found in Jasminum nudiflorum (Winter jasmine).